A 181-amino-acid chain; its full sequence is Putative NAD(P)H-dependent FMN-containing oxidoreductase YwqN (181 aa).

It belongs to the SsuE family. FMN is required as a cofactor.

In terms of biological role, putative NADPH-dependent oxidoreductase. This chain is Putative NAD(P)H-dependent FMN-containing oxidoreductase YwqN (ywqN), found in Bacillus subtilis (strain 168).